A 238-amino-acid chain; its full sequence is Synapse differentiation-inducing gene protein 1-like (238 aa).

3 disordered regions span residues 1 to 24, 78 to 111, and 126 to 155; these read MESL…GPYP, KVKE…PGQA, and EEFQ…NFLT. Over 1 to 162 the chain is Extracellular; sequence MESLSELQNP…FLTLPPRDHL (162 aa). Positions 133–151 are enriched in acidic residues; the sequence is GDPEEEESDATSTESESED. The chain crosses the membrane as a helical span at residues 163-183; the sequence is GLTIFSMLCCFWPLGIAAFYF. Over 184-205 the chain is Cytoplasmic; it reads SQGTSKAISKGDFRLANTTSRR. Residues 206 to 226 form a helical membrane-spanning segment; sequence ALFLATLSIAVGAGLYVAVVV. The Extracellular segment spans residues 227–238; it reads ALAAYMSQNGHS.

It belongs to the CD225/Dispanin family.

Its subcellular location is the membrane. It is found in the golgi apparatus. It localises to the cis-Golgi network. This is Synapse differentiation-inducing gene protein 1-like (SYNDIG1L) from Bos taurus (Bovine).